Reading from the N-terminus, the 55-residue chain is Large ribosomal subunit protein bL33 (55 aa).

It belongs to the bacterial ribosomal protein bL33 family.

The sequence is that of Large ribosomal subunit protein bL33 from Sinorhizobium medicae (strain WSM419) (Ensifer medicae).